The sequence spans 1655 residues: MAQKPNFLKKLISAGLVTASTATIVASFAGSAMGAAIQQNRTTNAVATTVDGVGFDQTAVPANVAVPLNAVITAGVNKGITLNTPAGSFNGLFLNTANNLDVTVREDTTLGFITNVVNNANHFNLMLNAGKTLTITGQGITNVQAAATKNANNVVAQVNNGAAIDNNDLQGVGRIDCGAAASTLVFNLANPTTQKAPLILGDNAVIVNGANGTLNVTNGFIKVSSKSFATVNVINIGDGQGIMFNTDADNVNTLNLQANGATITFNGTDGTGRLVLLSKNAAATDFNVTGSLGGNLKGIIEFNTVAVNGQLKANAGANAAVIGTNNGAGRAAGFVVSVDNGKVATIDGQVYAKDMVIQSANAVGQVNFRHIVDVGTDGTTAFKTAASKVAITQNSNFGTTDFGNLAAQIIVPNTMTLNGNFTGDASNPGNTAGVITFDANGTLASASADANVAVTNNITAIEASGAGVVQLSGTHAAELRLGNAGSVFKLADGTVINGKVNQTALVGGALAAGTITLDGSATITGDIGNAGGAAALQGITLANDATKTLTLGGANIIGANGGTINFQANGGTIKLTSTQNNIVVDFDLAIATDQTGVVDASSLTNAQTLTINGKIGTVGANNKTLGQFNIGSSKTVLSDGDVAINELVIGNNGAVQFAHNTYLITRTTNAAGQGKIIFNPVVNNNTTLATGTNLGSATNPLAEINFGSKGAANVDTVLNVGKGVNLYATNITTTDANVGSFIFNAGGTNIVSGTVGGQQGNKFNTVALDNGTTVKFLGNATFNGNTTIAANSTLQIGGNYTADFVASADGTGIVEFVNTGPITVTLNKQAAPVNALKQITVSGPGNVVINEIGNAGNYHGAVTDTIAFENSSLGAVVFLPRGIPFNDAGNRIPLTIKSTVGNKTATGFDVPSVIVLGVDSVIADGQVIGDQNNIVGLGLGSDNDIIVNATTLYAGIGTINNNQGTVTLSGGIPNTPGTVYGLGTGIGASKFKQVTFTTDYNNLGNIIATNATINDGVTVTTGGIAGIGFDGKITLGSVNGNGNVRFVDGILSHSTSMIGTTKANNGTVTYLGNAFVGNIGDSDTPVASVRFTGSDGGAGLQGNIYSQVIDFGTYNLGISNSNVILGGGTTAINGKINLRTNTLTFASGTSTWGNNTSIETTLTLANGNIGNIVILEGAQVNATTTGTTTIKVQDNANANFSGTQTYTLIQGGARFNGTLGGPNFVVTGSNRFVNYGLIRAANQDYVITRTNNAENVVTNDIANSSFGGAPGVGQNVTTFVNATNTAAYNNLLLAKNSANSANFVGAIVTDTSAAITNAQLDVAKDIQAQLGNRLGALRYLGTPETAEMAGPEAGAIPAAVAAGDEAVDNVAYGIWAKPFYTDAHQSKKGGLAGYKAKTTGVVIGLDTLANDNLMIGAAIGITKTDIKHQDYKKGDKTDVNGFSFSLYGAQQLVKNFFAQGSAIFSLNQVKNKSQRYFFDANGNMSKQIAAGHYDNMTFGGNLTVGYDYNAMQGVLVTPMAGLSYLKSSDENYKETGTTVANKQVNSKFSDRTDLIVGAKVAGSTMNITDLAVYPEVHAFVVHKVTGRLSKTQSVLDGQVTPCISQPDRTAKTSYNLGLSASIRSDAKMEYGIGYDAQISSKYTAHQGTLKVRVNF.

A propeptide spanning residues glycine 1335–alanine 1362 is cleaved from the precursor. The region spanning valine 1367 to phenylalanine 1655 is the Autotransporter domain.

It belongs to the rickettsiae OmpA/OmpB family.

It is found in the periplasm. Its subcellular location is the secreted. The protein localises to the cell surface. It localises to the cell outer membrane. In terms of biological role, the 120 kDa surface-exposed protein is a major structural protein which may play a role as a rickettsial virulence factor and/or immunogen during infection. Functionally, the 32 kDa beta peptide may serve as a membrane anchor. It has been shown to adhere to biotinylated Vero cell proteins. In Rickettsia conorii (strain ATCC VR-613 / Malish 7), this protein is Outer membrane protein B (ompB).